The sequence spans 369 residues: MRN complex-interacting protein (369 aa).

Ser115 carries the post-translational modification Phosphoserine. Disordered stretches follow at residues 122–150 (GGGV…PRKR), 209–245 (PSFT…PCPA), and 282–317 (AQAE…TPMP). Residues 148-151 (RKRK) carry the Nuclear localization signal (NLS) motif. Residues 221-230 (KGRESSREDL) show a composition bias toward basic and acidic residues. The segment at 223 to 259 (RESSREDLDTMELVPRGEPPCPAQQVRTMSKWEQCLG) is necessary for the association with the MRN complex.

This sequence belongs to the MRNIP family. Associates with the MRE11-RAD50-NBN (MRN) damage-sensing complex; this association is constitutive. Interacts with MRE11. Interacts with NBN. Interacts with RAD50. Phosphorylated; phosphorylation is constitutive and occurs in the absence of any DNA-damaging stimulus. Phosphorylation on Ser-115 is necessary for its nuclear retention.

Its subcellular location is the nucleus. It is found in the nucleoplasm. Plays a role in the cellular response to DNA damage and the maintenance of genome stability through its association with the MRN damage-sensing complex. Promotes chromatin loading and activity of the MRN complex to facilitate subsequent ATM-mediated DNA damage response signaling and DNA repair. The chain is MRN complex-interacting protein from Bos taurus (Bovine).